The chain runs to 160 residues: MVPKLFTPQICLLLLLGLMGVEGSLHARPPQFTKAQWFAIQHINVNPPRCTIAMRVINNYQRRCKNQNTFLRTTFANTVNVCRNRSIRCPRNRTLHNCHRSSYRVPLLHCDLINPGAQNISTCRYADRPGRRFYVVACESRDPRDSPRYPVVPVHLDTII.

A signal peptide spans 1-27 (MVPKLFTPQICLLLLLGLMGVEGSLHA). Residues 28–72 (RPPQFTKAQWFAIQHINVNPPRCTIAMRVINNYQRRCKNQNTFLR) form a required for nearly all of the bactericidal activities; partially involved in LPS-binding region. Residue histidine 42 is the Proton acceptor of the active site. 4 disulfide bridges follow: cysteine 50–cysteine 110, cysteine 64–cysteine 123, cysteine 82–cysteine 138, and cysteine 89–cysteine 98. Tyrosine 60 is subject to 3'-nitrotyrosine. Residue 65-69 (KNQNT) participates in substrate binding. Asparagine 84, asparagine 92, and asparagine 119 each carry an N-linked (GlcNAc...) asparagine glycan. The Proton donor role is filled by histidine 155.

This sequence belongs to the pancreatic ribonuclease family. As to quaternary structure, interacts with bacterial lipopolysaccharide (LPS) and lipoteichoic acid (LTA). In vitro interacts with phospholipid bilayers.

The protein localises to the secreted. In terms of biological role, cytotoxin and helminthotoxin with low-efficiency ribonuclease activity. Possesses a wide variety of biological activities. Exhibits antibacterial activity. This Macaca nemestrina (Pig-tailed macaque) protein is Eosinophil cationic protein (RNASE3).